A 172-amino-acid polypeptide reads, in one-letter code: 3-hydroxydecanoyl-[acyl-carrier-protein] dehydratase (172 aa).

The active site involves His-71.

This sequence belongs to the thioester dehydratase family. FabA subfamily. Homodimer.

The protein resides in the cytoplasm. The catalysed reaction is a (3R)-hydroxyacyl-[ACP] = a (2E)-enoyl-[ACP] + H2O. It carries out the reaction (3R)-hydroxydecanoyl-[ACP] = (2E)-decenoyl-[ACP] + H2O. It catalyses the reaction (2E)-decenoyl-[ACP] = (3Z)-decenoyl-[ACP]. The protein operates within lipid metabolism; fatty acid biosynthesis. Its function is as follows. Necessary for the introduction of cis unsaturation into fatty acids. Catalyzes the dehydration of (3R)-3-hydroxydecanoyl-ACP to E-(2)-decenoyl-ACP and then its isomerization to Z-(3)-decenoyl-ACP. Can catalyze the dehydratase reaction for beta-hydroxyacyl-ACPs with saturated chain lengths up to 16:0, being most active on intermediate chain length. This Sodalis glossinidius (strain morsitans) protein is 3-hydroxydecanoyl-[acyl-carrier-protein] dehydratase.